The chain runs to 255 residues: Receptor expression-enhancing protein 3 (255 aa).

Helical transmembrane passes span 1-21 (MVSW…YPAY), 35-55 (YVRW…ETVA), and 59-79 (VAWF…LLSP). Residues 158-242 (TIQGDEPVGQ…KGRKEVRYGS (85 aa)) form a disordered region. The residue at position 201 (Thr201) is a Phosphothreonine. Residue Ser210 is modified to Phosphoserine. Residues 222 to 231 (RSQSMKSVKT) are compositionally biased toward polar residues.

This sequence belongs to the DP1 family. In terms of tissue distribution, expressed in circumvallate papillae.

The protein resides in the endoplasmic reticulum membrane. In terms of biological role, microtubule-binding protein required to ensure proper cell division and nuclear envelope reassembly by sequestering the endoplasmic reticulum away from chromosomes during mitosis. Probably acts by clearing the endoplasmic reticulum membrane from metaphase chromosomes. This is Receptor expression-enhancing protein 3 (REEP3) from Homo sapiens (Human).